Consider the following 294-residue polypeptide: Halotolerance protein HAL1 (294 aa).

The interval 115–153 (LKRGTKEQEDINSSTSKKSAVINNFSGEKTPNPRPQSSN) is disordered. Residues 125 to 153 (INSSTSKKSAVINNFSGEKTPNPRPQSSN) are compositionally biased toward polar residues. Position 266 is a phosphoserine (Ser-266).

It localises to the cytoplasm. Functionally, involved in salt tolerance. In Saccharomyces cerevisiae (strain ATCC 204508 / S288c) (Baker's yeast), this protein is Halotolerance protein HAL1 (HAL1).